Reading from the N-terminus, the 75-residue chain is Psi-conotoxin PIIIE (75 aa).

A signal peptide spans 1–19 (MSKLGALLTICLLLFPITA). The propeptide occupies 20–50 (LLMDGDQPADRPAERMDYDISSEVHRLLERR). Residues Pro-52, Pro-53, and Pro-64 each carry the 4-hydroxyproline modification. 3 disulfide bridges follow: Cys-54/Cys-66, Cys-55/Cys-71, and Cys-60/Cys-72. The residue at position 74 (Gly-74) is a Glycine amide.

In terms of tissue distribution, expressed by the venom duct.

It is found in the secreted. Its function is as follows. Psi-conotoxins act on postsynaptic membranes, and act as non-competitive antagonist of nicotinic acetylcholine receptors (nAChR). Is more toxic than Psi-conotoxin PIIIF. In vivo, has paralytic activity when injected intraperitoneally into goldfish. The chain is Psi-conotoxin PIIIE from Conus purpurascens (Purple cone).